The primary structure comprises 389 residues: Phospho-N-acetylmuramoyl-pentapeptide-transferase (389 aa).

10 consecutive transmembrane segments (helical) span residues 25–45 (RAVM…PWVI), 73–93 (TMGG…WADL), 97–117 (FIWI…VDDY), 135–155 (FWQT…VSEI), 190–210 (VSYP…IVGS), 222–242 (GLVI…AYVM), 258–278 (GAGE…AFLW), 286–306 (VFMG…IAVI), 311–331 (IVLF…MMQV), and 366–386 (QVVV…LSSL).

This sequence belongs to the glycosyltransferase 4 family. MraY subfamily. Mg(2+) is required as a cofactor.

Its subcellular location is the cell inner membrane. It catalyses the reaction UDP-N-acetyl-alpha-D-muramoyl-L-alanyl-gamma-D-glutamyl-meso-2,6-diaminopimeloyl-D-alanyl-D-alanine + di-trans,octa-cis-undecaprenyl phosphate = di-trans,octa-cis-undecaprenyl diphospho-N-acetyl-alpha-D-muramoyl-L-alanyl-D-glutamyl-meso-2,6-diaminopimeloyl-D-alanyl-D-alanine + UMP. It functions in the pathway cell wall biogenesis; peptidoglycan biosynthesis. Its function is as follows. Catalyzes the initial step of the lipid cycle reactions in the biosynthesis of the cell wall peptidoglycan: transfers peptidoglycan precursor phospho-MurNAc-pentapeptide from UDP-MurNAc-pentapeptide onto the lipid carrier undecaprenyl phosphate, yielding undecaprenyl-pyrophosphoryl-MurNAc-pentapeptide, known as lipid I. The chain is Phospho-N-acetylmuramoyl-pentapeptide-transferase from Polynucleobacter asymbioticus (strain DSM 18221 / CIP 109841 / QLW-P1DMWA-1) (Polynucleobacter necessarius subsp. asymbioticus).